Reading from the N-terminus, the 394-residue chain is WAT1-related protein At2g40900 (394 aa).

Helical transmembrane passes span 13–33 (FAMV…KTVL), 40–60 (YVLV…FALL), 67–87 (SKMT…GPVI), 102–122 (TFSS…ATLF), 142–162 (LVTV…INFF), 180–200 (AAVF…LQAA), 209–229 (LSMS…LAFV), 245–265 (LLAS…VQGL), 273–293 (VFVT…SFFV), and 298–318 (IYLG…AVLW). 2 EamA domains span residues 22-147 (YAGM…TVVG) and 189-317 (LSWA…YAVL).

This sequence belongs to the drug/metabolite transporter (DMT) superfamily. Plant drug/metabolite exporter (P-DME) (TC 2.A.7.4) family.

It localises to the membrane. The chain is WAT1-related protein At2g40900 from Arabidopsis thaliana (Mouse-ear cress).